The primary structure comprises 30 residues: Scolopendra 20528.11 Da toxin (30 aa).

It belongs to the CRISP family. Venom allergen 5-like subfamily. Contains 3 disulfide bonds. Expressed by the venom gland.

It is found in the secreted. The protein is Scolopendra 20528.11 Da toxin of Scolopendra angulata (Barbados giant red centipede).